The following is a 139-amino-acid chain: ATP synthase epsilon chain (139 aa).

This sequence belongs to the ATPase epsilon chain family. F-type ATPases have 2 components, CF(1) - the catalytic core - and CF(0) - the membrane proton channel. CF(1) has five subunits: alpha(3), beta(3), gamma(1), delta(1), epsilon(1). CF(0) has three main subunits: a, b and c.

The protein localises to the cell inner membrane. In terms of biological role, produces ATP from ADP in the presence of a proton gradient across the membrane. The chain is ATP synthase epsilon chain from Serratia proteamaculans (strain 568).